A 146-amino-acid chain; its full sequence is Hemoglobin subunit beta-2 (146 aa).

Residues 2–146 form the Globin domain; that stretch reads GLTAHEKQLI…IADALGKGYH (145 aa). Residues His63 and His92 each coordinate heme b.

It belongs to the globin family. As to quaternary structure, heterotetramer of two alpha chains and two beta chains. As to expression, red blood cells.

Functionally, involved in oxygen transport from the lung to the various peripheral tissues. The chain is Hemoglobin subunit beta-2 (hbb2) from Xenopus borealis (Kenyan clawed frog).